Reading from the N-terminus, the 354-residue chain is Uroporphyrinogen decarboxylase (354 aa).

Substrate-binding positions include 27 to 31 (RQAGR), D77, Y153, T208, and H326.

This sequence belongs to the uroporphyrinogen decarboxylase family. Homodimer.

It localises to the cytoplasm. It carries out the reaction uroporphyrinogen III + 4 H(+) = coproporphyrinogen III + 4 CO2. It participates in porphyrin-containing compound metabolism; protoporphyrin-IX biosynthesis; coproporphyrinogen-III from 5-aminolevulinate: step 4/4. Its function is as follows. Catalyzes the decarboxylation of four acetate groups of uroporphyrinogen-III to yield coproporphyrinogen-III. This chain is Uroporphyrinogen decarboxylase, found in Neisseria gonorrhoeae (strain ATCC 700825 / FA 1090).